Reading from the N-terminus, the 532-residue chain is MLLDAGPQFPAIGVGSFARHHHHSAAAAAAAAAEMQDRELSLAAAQNGFVDSAAAHMGAFKLNPGAHELSPGQSSAFTSQGPGAYPGSAAAAAAAAALGPHAAHVGSYSGPPFNSTRDFLFRSRGFGDSAPGGGQHGLFGPGAGGLHHAHSDAQGHLLFPGLPEQHGPHGSQNVLNGQMRLGLPGEVFGRSEQYRQVASPRTDPYSAAQLHNQYGPMNMNMGMNMAAAAAHHHHHHHHHPGAFFRYMRQQCIKQELICKWIDPEQLSNPKKSCNKTFSTMHELVTHVSVEHVGGPEQSNHVCFWEECPREGKPFKAKYKLVNHIRVHTGEKPFPCPFPGCGKVFARSENLKIHKRTHTGEKPFQCEFEGCDRRFANSSDRKKHMHVHTSDKPYLCKMCDKSYTHPSSLRKHMKVHESSPQGSESSPAASSGYESSTPPGLVSPSAEPQSSSNLSPAAAAAAAAAAAAAAAVSAVHRGGGSGSGGAGGGSGGGSGSGGGGGGAGGGGGGSSGGGSGTAGGHSGLSSNFNEWYV.

The tract at residues 100 to 255 is necessary for interaction with MDFIC and transcriptional activation or repression; that stretch reads PHAAHVGSYS…YMRQQCIKQE (156 aa). Phosphoserine is present on residues Ser191 and Ser199. A Glycyl lysine isopeptide (Lys-Gly) (interchain with G-Cter in SUMO2) cross-link involves residue Lys253. The C2H2-type 1; atypical zinc-finger motif lies at 256-291; sequence LICKWIDPEQLSNPKKSCNKTFSTMHELVTHVSVEH. Residues 300-327 form a C2H2-type 2; atypical zinc finger; it reads HVCFWEECPREGKPFKAKYKLVNHIRVH. C2H2-type zinc fingers lie at residues 333–357, 363–387, and 393–415; these read FPCPFPGCGKVFARSENLKIHKRTH, FQCEFEGCDRRFANSSDRKKHMHVH, and YLCKMCDKSYTHPSSLRKHMKVH. Disordered stretches follow at residues 406 to 452 and 475 to 532; these read SSLR…SSSN and HRGG…EWYV. Residues 417 to 435 are compositionally biased toward low complexity; it reads SSPQGSESSPAASSGYESS. Residues 476 to 521 show a composition bias toward gly residues; it reads RGGGSGSGGAGGGSGGGSGSGGGGGGAGGGGGGSSGGGSGTAGGHS. A compositionally biased stretch (polar residues) spans 523–532; sequence LSSNFNEWYV.

It belongs to the GLI C2H2-type zinc-finger protein family. As to quaternary structure, interacts with RNF180. Interacts (via the C2H2-type domains 3, 4 and 5) with MDFIC (via the C2H2-type domains 3, 4 and 5); the interaction reduces its transcriptional activity. Interacts with GLI1 and GLI2. Interacts (via C2H2-type domain 3) with DHX9. Phosphorylated. Post-translationally, ubiquitinated by RNF180, leading to its degradation.

The protein resides in the nucleus. It is found in the cytoplasm. Its function is as follows. Acts as a transcriptional activator or repressor. Plays important roles in the early stage of organogenesis of the CNS. Activates the transcription of the serotonin transporter SERT in uncrossed ipsilateral retinal ganglion cells (iRGCs) to refine eye-specific projections in primary visual targets. Its transcriptional activity is repressed by MDFIC. Involved in the formation of the ipsilateral retinal projection at the optic chiasm midline. Drives the expression of EPHB1 on ipsilaterally projecting growth cones. Binds to the minimal GLI-consensus sequence 5'-TGGGTGGTC-3'. Associates to the basal SERT promoter region from ventrotemporal retinal segments of retinal embryos. This is Zinc finger protein ZIC 2 (ZIC2) from Homo sapiens (Human).